A 273-amino-acid polypeptide reads, in one-letter code: 4-hydroxy-tetrahydrodipicolinate reductase (273 aa).

NAD(+) contacts are provided by residues 12–17 (GAGGRM) and Glu38. Arg39 provides a ligand contact to NADP(+). Residues 102–104 (GTT) and 126–129 (AANF) each bind NAD(+). Residue His159 is the Proton donor/acceptor of the active site. His160 contributes to the (S)-2,3,4,5-tetrahydrodipicolinate binding site. Catalysis depends on Lys163, which acts as the Proton donor. Position 169–170 (169–170 (GT)) interacts with (S)-2,3,4,5-tetrahydrodipicolinate.

It belongs to the DapB family. Homotetramer.

It is found in the cytoplasm. The catalysed reaction is (S)-2,3,4,5-tetrahydrodipicolinate + NAD(+) + H2O = (2S,4S)-4-hydroxy-2,3,4,5-tetrahydrodipicolinate + NADH + H(+). It carries out the reaction (S)-2,3,4,5-tetrahydrodipicolinate + NADP(+) + H2O = (2S,4S)-4-hydroxy-2,3,4,5-tetrahydrodipicolinate + NADPH + H(+). It functions in the pathway amino-acid biosynthesis; L-lysine biosynthesis via DAP pathway; (S)-tetrahydrodipicolinate from L-aspartate: step 4/4. Catalyzes the conversion of 4-hydroxy-tetrahydrodipicolinate (HTPA) to tetrahydrodipicolinate. The protein is 4-hydroxy-tetrahydrodipicolinate reductase of Pectobacterium atrosepticum (strain SCRI 1043 / ATCC BAA-672) (Erwinia carotovora subsp. atroseptica).